The sequence spans 298 residues: Probable tRNA(His) guanylyltransferase (298 aa).

Mg(2+) is bound by residues aspartate 58, glycine 59, and aspartate 105. Residues 58–63 (DGRNFH) and 104–105 (SD) contribute to the GTP site.

The protein belongs to the tRNA(His) guanylyltransferase family. As to quaternary structure, homotetramer. Interacts with MFN1 and MFN2; functions as a guanyl-nucleotide exchange factor/GEF for MFN2 and also probably MFN1. It depends on Mg(2+) as a cofactor.

It localises to the cytoplasm. The protein localises to the mitochondrion. It carries out the reaction a 5'-end ribonucleotide-tRNA(His) + GTP + ATP + H2O = a 5'-end phospho-guanosine-ribonucleotide-tRNA(His) + AMP + 2 diphosphate + H(+). Adds a GMP to the 5'-end of tRNA(His) after transcription and RNase P cleavage. This step is essential for proper recognition of the tRNA and for the fidelity of protein synthesis. Also functions as a guanyl-nucleotide exchange factor/GEF for the MFN1 and MFN2 mitofusins thereby regulating mitochondrial fusion. By regulating both mitochondrial dynamics and bioenergetic function, it contributes to cell survival following oxidative stress. The polypeptide is Probable tRNA(His) guanylyltransferase (THG1L) (Bos taurus (Bovine)).